The sequence spans 516 residues: Glutamyl-tRNA(Gln) amidotransferase subunit B, mitochondrial (516 aa).

It belongs to the GatB/GatE family. GatB subfamily. In terms of assembly, subunit of the heterotrimeric GatCAB amidotransferase (AdT) complex, composed of A, B and C subunits.

It localises to the mitochondrion. The catalysed reaction is L-glutamyl-tRNA(Gln) + L-glutamine + ATP + H2O = L-glutaminyl-tRNA(Gln) + L-glutamate + ADP + phosphate + H(+). Its function is as follows. Allows the formation of correctly charged Gln-tRNA(Gln) through the transamidation of misacylated Glu-tRNA(Gln) in the mitochondria. The reaction takes place in the presence of glutamine and ATP through an activated gamma-phospho-Glu-tRNA(Gln). This Drosophila melanogaster (Fruit fly) protein is Glutamyl-tRNA(Gln) amidotransferase subunit B, mitochondrial.